We begin with the raw amino-acid sequence, 288 residues long: N-glycosylase/DNA lyase (288 aa).

Residues Gln-35, Ser-62, and Trp-73 each contribute to the 8-oxoguanine site. The interval 134–203 (NPLVLVERPS…VACASISSEM (70 aa)) is helix-hairpin-helix. The active-site Schiff-base intermediate with DNA is Lys-160. 8-oxoguanine-binding residues include Phe-164 and Pro-189. Asp-191 is a catalytic residue. Asp-238 and Trp-242 together coordinate 8-oxoguanine.

The protein belongs to the archaeal N-glycosylase/DNA lyase (AGOG) family.

It carries out the reaction 2'-deoxyribonucleotide-(2'-deoxyribose 5'-phosphate)-2'-deoxyribonucleotide-DNA = a 3'-end 2'-deoxyribonucleotide-(2,3-dehydro-2,3-deoxyribose 5'-phosphate)-DNA + a 5'-end 5'-phospho-2'-deoxyribonucleoside-DNA + H(+). Its function is as follows. DNA repair enzyme that is part of the base excision repair (BER) pathway; protects from oxidative damage by removing the major product of DNA oxidation, 8-oxoguanine (GO), from single- and double-stranded DNA substrates. This is N-glycosylase/DNA lyase from Aeropyrum pernix (strain ATCC 700893 / DSM 11879 / JCM 9820 / NBRC 100138 / K1).